The chain runs to 119 residues: Beta-2-microglobulin (119 aa).

The N-terminal stretch at Met-1–Ala-20 is a signal peptide. An Ig-like C1-type domain is found at Pro-25–Lys-114. Cys-45 and Cys-100 are joined by a disulfide.

This sequence belongs to the beta-2-microglobulin family. Heterodimer of an alpha chain and a beta chain. Beta-2-microglobulin is the beta-chain of major histocompatibility complex class I molecules.

It localises to the secreted. In terms of biological role, component of the class I major histocompatibility complex (MHC). Involved in the presentation of peptide antigens to the immune system. The sequence is that of Beta-2-microglobulin (B2M) from Callimico goeldii (Goeldi's marmoset).